Consider the following 424-residue polypeptide: Caspase-2 (424 aa).

Positions 1–140 (MLGACGMQRY…IVEHSLDSGD (140 aa)) are excised as a propeptide. In terms of domain architecture, CARD spans 7-96 (MQRYHQEALK…QHLAEMILKT (90 aa)). Residues His248 and Cys291 contribute to the active site. The span at 296-310 (TDRGVDQRDGKERSD) shows a compositional bias: basic and acidic residues. The tract at residues 296 to 325 (TDRGVDQRDGKERSDSPGCEESDANKEENL) is disordered.

It belongs to the peptidase C14A family. As to quaternary structure, heterotetramer that consists of two anti-parallel arranged heterodimers, each one formed by a p18 subunit and a p12 subunit.

The catalysed reaction is Strict requirement for an Asp residue at P1, with 316-Asp being essential for proteolytic activity and has a preferred cleavage sequence of Val-Asp-Val-Ala-Asp-|-.. Involved in the activation cascade of caspases responsible for apoptosis execution. Might function by either activating some proteins required for cell death or inactivating proteins necessary for cell survival. The protein is Caspase-2 (CASP2) of Gallus gallus (Chicken).